The following is a 1122-amino-acid chain: Transcription-repair-coupling factor (1122 aa).

In terms of domain architecture, Helicase ATP-binding spans 593 to 758 (DLRNGMLMDR…MTGLKELSII (166 aa)). Residue 606-613 (GDVGFGKT) coordinates ATP. A DEEQ box motif is present at residues 711 to 714 (DEEQ). Residues 779–933 (IIRDALLREH…GFTIASRDMD (155 aa)) enclose the Helicase C-terminal domain.

It in the N-terminal section; belongs to the UvrB family. This sequence in the C-terminal section; belongs to the helicase family. RecG subfamily.

Its subcellular location is the cytoplasm. Functionally, couples transcription and DNA repair by recognizing RNA polymerase (RNAP) stalled at DNA lesions. Mediates ATP-dependent release of RNAP and its truncated transcript from the DNA, and recruitment of nucleotide excision repair machinery to the damaged site. The polypeptide is Transcription-repair-coupling factor (Rickettsia conorii (strain ATCC VR-613 / Malish 7)).